The chain runs to 463 residues: Peptidylprolyl isomerase cyp7 (463 aa).

A PPIase cyclophilin-type domain is found at 11–166 (ATGTVILKTT…FPPKIISTEV (156 aa)). A disordered region spans residues 224–275 (VKKPLRQKTPVSRSSDTTTELSKDLISSSSSIHSTYSSAQTGLTSAKVSSDE). The segment covering 232 to 243 (TPVSRSSDTTTE) has biased composition (polar residues). Positions 250–261 (SSSSSIHSTYSS) are enriched in low complexity. Positions 262 to 271 (AQTGLTSAKV) are enriched in polar residues.

It belongs to the cyclophilin-type PPIase family. CWC27 subfamily. Belongs to the 40S cdc5-associated complex (or cwf complex), a spliceosome sub-complex reminiscent of a late-stage spliceosome composed of the U2, U5 and U6 snRNAs and at least brr2, cdc5, cwf2/prp3, cwf3/syf1, cwf4/syf3, cwf5/ecm2, spp42/cwf6, cwf7/spf27, cwf8, cwf9, cwf10, cwf11, cwf12, prp45/cwf13, cwf14, cwf15, cwf16, cwf17, cwf18, cwf19, cwf20, cwf21, cwf22, cwf23, cwf24, cwf25, cwf26, cyp7/cwf27, cwf28, cwf29/ist3, lea1, msl1, prp5/cwf1, prp10, prp12/sap130, prp17, prp22, sap61, sap62, sap114, sap145, slu7, smb1, smd1, smd3, smf1, smg1 and syf2.

It localises to the cytoplasm. Its subcellular location is the nucleus. The enzyme catalyses [protein]-peptidylproline (omega=180) = [protein]-peptidylproline (omega=0). PPIases accelerate the folding of proteins. Catalyzes the cis-trans isomerization of proline imidic peptide bonds in oligopeptides. Involved in pre-mRNA splicing. This is Peptidylprolyl isomerase cyp7 (cyp7) from Schizosaccharomyces pombe (strain 972 / ATCC 24843) (Fission yeast).